Here is an 85-residue protein sequence, read N- to C-terminus: Small ribosomal subunit protein uS17 (85 aa).

Belongs to the universal ribosomal protein uS17 family. As to quaternary structure, part of the 30S ribosomal subunit.

One of the primary rRNA binding proteins, it binds specifically to the 5'-end of 16S ribosomal RNA. The sequence is that of Small ribosomal subunit protein uS17 from Pseudoalteromonas translucida (strain TAC 125).